We begin with the raw amino-acid sequence, 125 residues long: Probable 4-amino-4-deoxy-L-arabinose-phosphoundecaprenol flippase subunit ArnF (125 aa).

Over 1-2 the chain is Cytoplasmic; it reads MG. The helical transmembrane segment at 3 to 23 threads the bilayer; it reads VMWGLISVAIASLAQLSLGFA. The Periplasmic portion of the chain corresponds to 24 to 33; sequence MMRLPSIAHP. A helical membrane pass occupies residues 34 to 54; that stretch reads LAFISGLGAFNAATLALFAGL. The Cytoplasmic segment spans residues 55-76; that stretch reads AGYLVSVFCWQKTLHMLALSKA. Residues 77–97 form a helical membrane-spanning segment; the sequence is YALLSLSYVLVWVASMLLPGL. Topologically, residues 98–100 are periplasmic; that stretch reads QGA. A helical membrane pass occupies residues 101–121; it reads FSLKAMLGVLCIMAGVMLIFL. Over 122–125 the chain is Cytoplasmic; the sequence is PARS.

It belongs to the ArnF family. Heterodimer of ArnE and ArnF.

It localises to the cell inner membrane. It participates in bacterial outer membrane biogenesis; lipopolysaccharide biosynthesis. Translocates 4-amino-4-deoxy-L-arabinose-phosphoundecaprenol (alpha-L-Ara4N-phosphoundecaprenol) from the cytoplasmic to the periplasmic side of the inner membrane. The protein is Probable 4-amino-4-deoxy-L-arabinose-phosphoundecaprenol flippase subunit ArnF of Salmonella paratyphi A (strain ATCC 9150 / SARB42).